A 399-amino-acid chain; its full sequence is Probable tRNA sulfurtransferase (399 aa).

The 106-residue stretch at Tyr-60 to Thr-165 folds into the THUMP domain. ATP contacts are provided by residues Leu-183–Leu-184, His-208–Phe-209, Arg-265, Gly-287, and Gln-296.

This sequence belongs to the ThiI family.

The protein resides in the cytoplasm. The enzyme catalyses [ThiI sulfur-carrier protein]-S-sulfanyl-L-cysteine + a uridine in tRNA + 2 reduced [2Fe-2S]-[ferredoxin] + ATP + H(+) = [ThiI sulfur-carrier protein]-L-cysteine + a 4-thiouridine in tRNA + 2 oxidized [2Fe-2S]-[ferredoxin] + AMP + diphosphate. It catalyses the reaction [ThiS sulfur-carrier protein]-C-terminal Gly-Gly-AMP + S-sulfanyl-L-cysteinyl-[cysteine desulfurase] + AH2 = [ThiS sulfur-carrier protein]-C-terminal-Gly-aminoethanethioate + L-cysteinyl-[cysteine desulfurase] + A + AMP + 2 H(+). Its pathway is cofactor biosynthesis; thiamine diphosphate biosynthesis. In terms of biological role, catalyzes the ATP-dependent transfer of a sulfur to tRNA to produce 4-thiouridine in position 8 of tRNAs, which functions as a near-UV photosensor. Also catalyzes the transfer of sulfur to the sulfur carrier protein ThiS, forming ThiS-thiocarboxylate. This is a step in the synthesis of thiazole, in the thiamine biosynthesis pathway. The sulfur is donated as persulfide by IscS. The chain is Probable tRNA sulfurtransferase from Brevibacillus brevis (strain 47 / JCM 6285 / NBRC 100599).